Here is a 243-residue protein sequence, read N- to C-terminus: 1-(5-phosphoribosyl)-5-[(5-phosphoribosylamino)methylideneamino] imidazole-4-carboxamide isomerase (243 aa).

The Proton acceptor role is filled by Asp-8. Asp-129 (proton donor) is an active-site residue.

Belongs to the HisA/HisF family.

The protein localises to the cytoplasm. It catalyses the reaction 1-(5-phospho-beta-D-ribosyl)-5-[(5-phospho-beta-D-ribosylamino)methylideneamino]imidazole-4-carboxamide = 5-[(5-phospho-1-deoxy-D-ribulos-1-ylimino)methylamino]-1-(5-phospho-beta-D-ribosyl)imidazole-4-carboxamide. Its pathway is amino-acid biosynthesis; L-histidine biosynthesis; L-histidine from 5-phospho-alpha-D-ribose 1-diphosphate: step 4/9. This chain is 1-(5-phosphoribosyl)-5-[(5-phosphoribosylamino)methylideneamino] imidazole-4-carboxamide isomerase, found in Citrifermentans bemidjiense (strain ATCC BAA-1014 / DSM 16622 / JCM 12645 / Bem) (Geobacter bemidjiensis).